Consider the following 454-residue polypeptide: Replicative DNA helicase DnaC (454 aa).

Residues 179 to 445 (RKGDITGIPT…NKFVNLERRF (267 aa)) enclose the SF4 helicase domain. Position 210 to 217 (210 to 217 (ARPSVGKT)) interacts with ATP.

The protein belongs to the helicase family. DnaB subfamily. In terms of assembly, the DNA replisome assembles sequentially on oriC in this order; DnaA, DnaD, DnaB, DnaI-DnaC helicase. Monomer in the absence of ATP, in its presence forms a probable homohexamer which is not active as a helicase in vitro. Interacts separately and simultaneously with helicase loaders DnaB and DnaI. Interaction with DnaB does not require ATP. Interaction with DnaI requires ATP, probably forms a DnaC(6):DnaI(6) complex, which is not active as a helicase.

It is found in the cytoplasm. It localises to the nucleoid. The catalysed reaction is Couples ATP hydrolysis with the unwinding of duplex DNA at the replication fork by translocating in the 5'-3' direction. This creates two antiparallel DNA single strands (ssDNA). The leading ssDNA polymer is the template for DNA polymerase III holoenzyme which synthesizes a continuous strand.. The enzyme catalyses ATP + H2O = ADP + phosphate + H(+). The main replicative DNA helicase, it participates in initiation and elongation during chromosome replication. Travels ahead of the DNA replisome, separating dsDNA into templates for DNA synthesis. The monomer has helicase activity in the presence of DnaI which is further increased by DnaB; the purified oligomeric form (probably a DnaC hexamer) does not have helicase activity in vitro, nor does the DnaC(6):DnaI(6) complex. The direction was not determined but is probably 5'-3'. Helicase activity requires an rNTP and is inactive with dNTPs. Has weak ATPase activity as a monomer, as an oligomer has ATPase activity which is stimulated by single-stranded (ss)DNA and further stimulated by DnaI and more by DnaB. Its function is as follows. Deletion of a single T residue in the promoter region (a run of 8 Ts becomes 7 Ts) decreases the helicase levels by 50%, decreasing DNA replication inititation during fast growth in rich medium. Suppresses the synthetic lethality of a dnaA1-yabA deletion for growth on rich medium. The sequence is that of Replicative DNA helicase DnaC from Bacillus subtilis (strain 168).